The following is a 398-amino-acid chain: Nuclear egress protein 2 (398 aa).

The Perinuclear space segment spans residues 1 to 359; the sequence is MEMNKVLHQD…GPSRPQSGPW (359 aa). Disordered regions lie at residues 202 to 246 and 306 to 334; these read ALTR…PPPP and LEEH…SLER. Over residues 215–224 the composition is skewed to pro residues; it reads ASPPPPPPRH. S216 is subject to Phosphoserine. The span at 225–240 shows a compositional bias: low complexity; the sequence is PSCSPTMVAAGGAAAG. The span at 311-323 shows a compositional bias: basic residues; it reads SRRRGVSTHHRHP. The chain crosses the membrane as a helical span at residues 360–382; that stretch reads LPARFATLGPLVLALLLVLALLW. Residues 383–398 lie on the Nuclear side of the membrane; that stretch reads RGHGQSSSPTRSAHRD.

This sequence belongs to the herpesviridae NEC2 protein family. Forms a heterohexameric complex with NEC1. Interacts with host UBA7 and RNF170; this interaction promotes UBA7 proteasomal degradation. In terms of processing, phosphorylated. Phosphorylation by viral kinase UL97 at Ser-216 plays an important role for correct viral nuclear egress complex (NEC) localization.

It is found in the host nucleus inner membrane. Its function is as follows. Plays an essential role in virion nuclear egress, the first step of virion release from infected cell. Within the host nucleus, NEC1 interacts with the newly formed capsid through the vertexes and directs it to the inner nuclear membrane by associating with NEC2. Induces the budding of the capsid at the inner nuclear membrane as well as its envelopment into the perinuclear space. There, the NEC1/NEC2 complex promotes the fusion of the enveloped capsid with the outer nuclear membrane and the subsequent release of the viral capsid into the cytoplasm where it will reach the secondary budding sites in the host Golgi or trans-Golgi network. Inhibits host ISGylation and subsequent innate antiviral response by targeting host UBA7 for proteasomal degradation. The protein is Nuclear egress protein 2 of Homo sapiens (Human).